The sequence spans 1154 residues: CRISPR-associated endoribonuclease Cas13a (1154 aa).

HEPN-like fold stretches follow at residues 330–466 and 923–1154; these read TTSN…RFIN and FVHL…EMKK.

It belongs to the CRISPR-associated endoribonuclease Cas13a family. A divalent metal cation serves as cofactor.

Target RNA acts as an activator for non-specific ssRNA degradation. Functionally, CRISPR (clustered regularly interspaced short palindromic repeat), is an adaptive immune system that provides protection against mobile genetic elements (viruses, transposable elements and conjugative plasmids). CRISPR clusters contain sequences complementary to antecedent mobile elements and target invading nucleic acids. Unlike many single-component effectors, this CRISPR-Cas system targets RNA. CRISPR clusters are transcribed from pre-CRISPR RNA (crRNA) and processed into crRNA by this protein. Cleaves linear target ssRNA in a pre-crRNA-dependent fashion, preferentially before U residues. Binding a viable target RNA target activates this protein for non-specific RNA degradation in vitro (called collateral RNA degradation), which is fairly sensitive as it requires picomolar levels of viable target RNA. This is CRISPR-associated endoribonuclease Cas13a from Paludibacter propionicigenes (strain DSM 17365 / JCM 13257 / WB4).